Here is a 107-residue protein sequence, read N- to C-terminus: Large ribosomal subunit protein uL24 (107 aa).

The protein belongs to the universal ribosomal protein uL24 family. As to quaternary structure, part of the 50S ribosomal subunit.

In terms of biological role, one of two assembly initiator proteins, it binds directly to the 5'-end of the 23S rRNA, where it nucleates assembly of the 50S subunit. Functionally, one of the proteins that surrounds the polypeptide exit tunnel on the outside of the subunit. This is Large ribosomal subunit protein uL24 from Gluconacetobacter diazotrophicus (strain ATCC 49037 / DSM 5601 / CCUG 37298 / CIP 103539 / LMG 7603 / PAl5).